The primary structure comprises 189 residues: Thermostable direct hemolysin 2 (189 aa).

The first 24 residues, 1–24 (MKYRYFAKKSFLFISMLAAFKTFA), serve as a signal peptide directing secretion. A disulfide bridge links Cys175 with Cys185.

The protein belongs to the TDH hemolysin family. Homodimer.

Bacterial hemolysins are exotoxins that attack blood cell membranes and cause cell rupture by mechanisms not clearly defined. This Vibrio parahaemolyticus serotype O3:K6 (strain RIMD 2210633) protein is Thermostable direct hemolysin 2 (tdh2).